The sequence spans 205 residues: High frequency lysogenization protein HflD homolog (205 aa).

This sequence belongs to the HflD family.

Its subcellular location is the cytoplasm. It is found in the cell inner membrane. The sequence is that of High frequency lysogenization protein HflD homolog from Shewanella baltica (strain OS155 / ATCC BAA-1091).